The sequence spans 572 residues: 2-succinyl-5-enolpyruvyl-6-hydroxy-3-cyclohexene-1-carboxylate synthase (572 aa).

The protein belongs to the TPP enzyme family. MenD subfamily. In terms of assembly, homodimer. It depends on Mg(2+) as a cofactor. Mn(2+) serves as cofactor. Requires thiamine diphosphate as cofactor.

The enzyme catalyses isochorismate + 2-oxoglutarate + H(+) = 5-enolpyruvoyl-6-hydroxy-2-succinyl-cyclohex-3-ene-1-carboxylate + CO2. Its pathway is quinol/quinone metabolism; 1,4-dihydroxy-2-naphthoate biosynthesis; 1,4-dihydroxy-2-naphthoate from chorismate: step 2/7. The protein operates within quinol/quinone metabolism; menaquinone biosynthesis. Catalyzes the thiamine diphosphate-dependent decarboxylation of 2-oxoglutarate and the subsequent addition of the resulting succinic semialdehyde-thiamine pyrophosphate anion to isochorismate to yield 2-succinyl-5-enolpyruvyl-6-hydroxy-3-cyclohexene-1-carboxylate (SEPHCHC). This is 2-succinyl-5-enolpyruvyl-6-hydroxy-3-cyclohexene-1-carboxylate synthase from Aeromonas salmonicida (strain A449).